The primary structure comprises 199 residues: NADH-quinone oxidoreductase subunit C (199 aa).

This sequence belongs to the complex I 30 kDa subunit family. In terms of assembly, NDH-1 is composed of 14 different subunits. Subunits NuoB, C, D, E, F, and G constitute the peripheral sector of the complex.

It is found in the cell inner membrane. It catalyses the reaction a quinone + NADH + 5 H(+)(in) = a quinol + NAD(+) + 4 H(+)(out). Functionally, NDH-1 shuttles electrons from NADH, via FMN and iron-sulfur (Fe-S) centers, to quinones in the respiratory chain. The immediate electron acceptor for the enzyme in this species is believed to be ubiquinone. Couples the redox reaction to proton translocation (for every two electrons transferred, four hydrogen ions are translocated across the cytoplasmic membrane), and thus conserves the redox energy in a proton gradient. The protein is NADH-quinone oxidoreductase subunit C of Paramagnetospirillum magneticum (strain ATCC 700264 / AMB-1) (Magnetospirillum magneticum).